The chain runs to 122 residues: Large ribosomal subunit protein uL14 (122 aa).

Belongs to the universal ribosomal protein uL14 family. As to quaternary structure, part of the 50S ribosomal subunit. Forms a cluster with proteins L3 and L19. In the 70S ribosome, L14 and L19 interact and together make contacts with the 16S rRNA in bridges B5 and B8.

In terms of biological role, binds to 23S rRNA. Forms part of two intersubunit bridges in the 70S ribosome. The protein is Large ribosomal subunit protein uL14 of Polynucleobacter asymbioticus (strain DSM 18221 / CIP 109841 / QLW-P1DMWA-1) (Polynucleobacter necessarius subsp. asymbioticus).